Consider the following 412-residue polypeptide: MKAARFVMRSASSLSSASLVPREVELFSRYSPSPLSMKQLLDFGSENACERTSFAFLRQELPVRLANILKEIDILPDRLVNTPSVQLVKSWYIQSLMDLVEFHEKSPEDQKALSEFVDTLVKVRNRHHNVVPTMAQGILEYKDTCTVDPVTNQNLQYFLDRFYMNRISTRMLMNQHILIFSDSKTGNPSHIGSIDPNCDVVAVVQDAFECAKMLCDQYYLTSPELNLTQVNGKFPGQPIHIVYVPSHLHHMLFELFKNAMRATVEHQENRPSLTPVEATVVLGKEDLTIKISDRGGGVPLRITDRLFSYTYSTAPTPVMDNSRNAPLAGFGYGLPISRLYAKYFQGDLNLYSMSGYGTDAIIYLKALSSESVEKLPVFNKSAFKHYQMSSEADDWCIPSREPKNLAKEKLAV.

In terms of domain architecture, Histidine kinase spans 138 to 368 (ILEYKDTCTV…DAIIYLKALS (231 aa)). Residues 254–261 (ELFKNAMR), D293, 312–313 (ST), and 329–334 (GFGYGL) contribute to the ATP site.

Belongs to the PDK/BCKDK protein kinase family. Homodimer. Interacts with the pyruvate dehydrogenase complex subunit DLAT, and is part of the multimeric pyruvate dehydrogenase complex that contains multiple copies of pyruvate dehydrogenase (E1), dihydrolipoamide acetyltransferase (DLAT, E2) and lipoamide dehydrogenase (DLD, E3).

The protein localises to the mitochondrion matrix. It carries out the reaction L-seryl-[pyruvate dehydrogenase E1 alpha subunit] + ATP = O-phospho-L-seryl-[pyruvate dehydrogenase E1 alpha subunit] + ADP + H(+). Its function is as follows. Kinase that plays a key role in regulation of glucose and fatty acid metabolism and homeostasis via phosphorylation of the pyruvate dehydrogenase subunits PDHA1 and PDHA2. This inhibits pyruvate dehydrogenase activity, and thereby regulates metabolite flux through the tricarboxylic acid cycle, down-regulates aerobic respiration and inhibits the formation of acetyl-coenzyme A from pyruvate. Inhibition of pyruvate dehydrogenase decreases glucose utilization and increases fat metabolism in response to prolonged fasting and starvation. Plays an important role in maintaining normal blood glucose levels under starvation, and is involved in the insulin signaling cascade. Via its regulation of pyruvate dehydrogenase activity, plays an important role in maintaining normal blood pH and in preventing the accumulation of ketone bodies under starvation. In the fed state, mediates cellular responses to glucose levels and to a high-fat diet. Regulates both fatty acid oxidation and de novo fatty acid biosynthesis. Plays a role in the generation of reactive oxygen species. Protects detached epithelial cells against anoikis. Plays a role in cell proliferation via its role in regulating carbohydrate and fatty acid metabolism. The protein is [Pyruvate dehydrogenase (acetyl-transferring)] kinase isozyme 4, mitochondrial (Pdk4) of Mus musculus (Mouse).